A 365-amino-acid chain; its full sequence is tRNA/tmRNA (uracil-C(5))-methyltransferase (365 aa).

Residues Q189, Y217, N222, E238, and D298 each contribute to the S-adenosyl-L-methionine site. The active-site Nucleophile is C323. Catalysis depends on E357, which acts as the Proton acceptor.

Belongs to the class I-like SAM-binding methyltransferase superfamily. RNA M5U methyltransferase family. TrmA subfamily.

It catalyses the reaction uridine(54) in tRNA + S-adenosyl-L-methionine = 5-methyluridine(54) in tRNA + S-adenosyl-L-homocysteine + H(+). It carries out the reaction uridine(341) in tmRNA + S-adenosyl-L-methionine = 5-methyluridine(341) in tmRNA + S-adenosyl-L-homocysteine + H(+). Its function is as follows. Dual-specificity methyltransferase that catalyzes the formation of 5-methyluridine at position 54 (m5U54) in all tRNAs, and that of position 341 (m5U341) in tmRNA (transfer-mRNA). The protein is tRNA/tmRNA (uracil-C(5))-methyltransferase of Shewanella pealeana (strain ATCC 700345 / ANG-SQ1).